The chain runs to 142 residues: MLMPRRVKYRKQQRGRMKGKAKGGTFVQFGEWGLKALEPAWITAQQIEACRIAMLRAMKRSGKIWIRIFPDKPYTKKPPESRMGKGKGNVEGWVAVVKPGKILFEVAGVDEETAHEALRYAASKLPIATKVVPRHHIGGEAV.

Belongs to the universal ribosomal protein uL16 family. In terms of assembly, part of the 50S ribosomal subunit.

Binds 23S rRNA and is also seen to make contacts with the A and possibly P site tRNAs. This chain is Large ribosomal subunit protein uL16, found in Thermotoga sp. (strain RQ2).